Reading from the N-terminus, the 61-residue chain is uncharacterized protein (61 aa).

An N-terminal signal peptide occupies residues 1-30 (MDVEVANMAAKLRVRGLKLPNAIVVSTAIL).

This is an uncharacterized protein from Archaeoglobus fulgidus (strain ATCC 49558 / DSM 4304 / JCM 9628 / NBRC 100126 / VC-16).